The chain runs to 145 residues: NADH-ubiquinone oxidoreductase subunit 8 (145 aa).

2 4Fe-4S ferredoxin-type domains span residues 43-73 (LRFY…VRVG) and 83-112 (DWFT…HSLF). [4Fe-4S] cluster contacts are provided by Cys-53, Cys-56, Cys-59, Cys-63, Cys-92, Cys-95, Cys-98, and Cys-102.

This sequence belongs to the complex I 23 kDa subunit family. The cofactor is [4Fe-4S] cluster.

The protein resides in the mitochondrion. The catalysed reaction is a ubiquinone + NADH + 5 H(+)(in) = a ubiquinol + NAD(+) + 4 H(+)(out). Its function is as follows. Core subunit of the mitochondrial membrane respiratory chain NADH dehydrogenase (Complex I) that is believed to belong to the minimal assembly required for catalysis. Complex I functions in the transfer of electrons from NADH to the respiratory chain. The immediate electron acceptor for the enzyme is believed to be ubiquinone. May donate electrons to ubiquinone. This chain is NADH-ubiquinone oxidoreductase subunit 8 (M-ISP1), found in Trypanosoma brucei brucei.